Here is a 158-residue protein sequence, read N- to C-terminus: MMMDILMYLFETYVHSDADLQVDQDQLEDELLRAGFHQKDIYKALHWLEELAALQQTDAQTAIAKSAPTSMRIYAPEEIERLDLESRGFLLFLEHINVLTPETREMVIDRVMGLETDEFELDDLKWIILMVLFNVPGNENAYTVMEELLYSKEQGILH.

This sequence belongs to the Smg family.

This is Protein Smg homolog from Vibrio cholerae serotype O1 (strain ATCC 39315 / El Tor Inaba N16961).